The sequence spans 2172 residues: DExH-box ATP-dependent RNA helicase DExH13 (2172 aa).

The segment at 20 to 83 (YKVNSSLVLN…KSKKKKERCD (64 aa)) is disordered. A compositionally biased stretch (basic and acidic residues) spans 30-73 (SDERRRDTHESSGEPESLRGRIDPKSFGDRVVRGRPHELDERLN). In terms of domain architecture, Helicase ATP-binding 1 spans 515–698 (GTALFKADNI…FLRVDLKNGL (184 aa)). 528 to 535 (APTGAGKT) lines the ATP pocket. The DEIH box motif lies at 640–643 (DEIH). In terms of domain architecture, Helicase C-terminal 1 spans 742-946 (GKHQVLIFVH…NAREACHWLG (205 aa)). The region spanning 1007-1308 (TDLGRIASYY…KWLDSPTVLP (302 aa)) is the SEC63 1 domain. The region spanning 1361–1538 (TVLYNTSDNV…WIGASSCGVF (178 aa)) is the Helicase ATP-binding 2 domain. 1374-1381 (APTGSGKT) is a binding site for ATP. The short motif at 1480–1483 (DELH) is the DELH box element. One can recognise a Helicase C-terminal 2 domain in the interval 1575-1772 (AIVQHAKNKK…NFNAEVVARV (198 aa)). One can recognise an SEC63 2 domain in the interval 1840 to 2157 (PLNLGMIASY…YLGCDQEYSF (318 aa)).

It localises to the nucleus. It carries out the reaction ATP + H2O = ADP + phosphate + H(+). In terms of biological role, RNA helicase that plays an essential role in pre-mRNA splicing as component of the U5 snRNP and U4/U6-U5 tri-snRNP complexes. Involved in spliceosome assembly, activation and disassembly. This Arabidopsis thaliana (Mouse-ear cress) protein is DExH-box ATP-dependent RNA helicase DExH13.